The chain runs to 78 residues: Acyl carrier protein (78 aa).

Residues 2-77 (SEIASRVKAI…DAVAYIEEHA (76 aa)) enclose the Carrier domain. At serine 37 the chain carries O-(pantetheine 4'-phosphoryl)serine.

It belongs to the acyl carrier protein (ACP) family. 4'-phosphopantetheine is transferred from CoA to a specific serine of apo-ACP by AcpS. This modification is essential for activity because fatty acids are bound in thioester linkage to the sulfhydryl of the prosthetic group.

The protein localises to the cytoplasm. Its pathway is lipid metabolism; fatty acid biosynthesis. Functionally, carrier of the growing fatty acid chain in fatty acid biosynthesis. This Bacteroides fragilis (strain ATCC 25285 / DSM 2151 / CCUG 4856 / JCM 11019 / LMG 10263 / NCTC 9343 / Onslow / VPI 2553 / EN-2) protein is Acyl carrier protein.